A 320-amino-acid polypeptide reads, in one-letter code: F-box protein At2g02240 (320 aa).

Residues 58–104 form the F-box domain; it reads TSPFDVLPEDCISNIISFTSPRDACVAASVSKTFESAVSSDCVWDKF.

In Arabidopsis thaliana (Mouse-ear cress), this protein is F-box protein At2g02240.